The following is a 187-amino-acid chain: Avirulence protein ATR39-2 (187 aa).

The first 20 residues, 1–20, serve as a signal peptide directing secretion; sequence MVKCTPLLALTVIVSAGSDA. The RxLR-dEER motif lies at 49-66; it reads RVLRASDVPNEVAAGESR.

The protein belongs to the RxLR effector family.

The protein resides in the secreted. It localises to the host cell. Functionally, secreted effector that acts as an elicitor of hypersensitive response (HR) specifically on plants carrying defense protein RPP39. The allele ATR39-1 is recognized by RPP39, whereas the ATR39-2 allele is nor recognized. The sequence is that of Avirulence protein ATR39-2 from Hyaloperonospora arabidopsidis (strain Emoy2) (Downy mildew agent).